Here is a 304-residue protein sequence, read N- to C-terminus: Oxygen-dependent coproporphyrinogen-III oxidase (304 aa).

Residue Ser95 coordinates substrate. A divalent metal cation contacts are provided by His99 and His109. His109 (proton donor) is an active-site residue. Residue 111 to 113 (NVR) coordinates substrate. A divalent metal cation contacts are provided by His148 and His178. Residues 243–278 (YVEFNLVYDRGTLFGLQSGGRTESILMSLPPLVRWR) form an important for dimerization region. 261 to 263 (GGR) lines the substrate pocket.

Belongs to the aerobic coproporphyrinogen-III oxidase family. Homodimer. Requires a divalent metal cation as cofactor.

Its subcellular location is the cytoplasm. It carries out the reaction coproporphyrinogen III + O2 + 2 H(+) = protoporphyrinogen IX + 2 CO2 + 2 H2O. The protein operates within porphyrin-containing compound metabolism; protoporphyrin-IX biosynthesis; protoporphyrinogen-IX from coproporphyrinogen-III (O2 route): step 1/1. Its function is as follows. Involved in the heme biosynthesis. Catalyzes the aerobic oxidative decarboxylation of propionate groups of rings A and B of coproporphyrinogen-III to yield the vinyl groups in protoporphyrinogen-IX. In Thioalkalivibrio sulfidiphilus (strain HL-EbGR7), this protein is Oxygen-dependent coproporphyrinogen-III oxidase.